The primary structure comprises 191 residues: Leucyl/phenylalanyl-tRNA--protein transferase (191 aa).

It belongs to the L/F-transferase family.

It localises to the cytoplasm. The catalysed reaction is N-terminal L-lysyl-[protein] + L-leucyl-tRNA(Leu) = N-terminal L-leucyl-L-lysyl-[protein] + tRNA(Leu) + H(+). It catalyses the reaction N-terminal L-arginyl-[protein] + L-leucyl-tRNA(Leu) = N-terminal L-leucyl-L-arginyl-[protein] + tRNA(Leu) + H(+). The enzyme catalyses L-phenylalanyl-tRNA(Phe) + an N-terminal L-alpha-aminoacyl-[protein] = an N-terminal L-phenylalanyl-L-alpha-aminoacyl-[protein] + tRNA(Phe). In terms of biological role, functions in the N-end rule pathway of protein degradation where it conjugates Leu, Phe and, less efficiently, Met from aminoacyl-tRNAs to the N-termini of proteins containing an N-terminal arginine or lysine. The polypeptide is Leucyl/phenylalanyl-tRNA--protein transferase (Nostoc sp. (strain PCC 7120 / SAG 25.82 / UTEX 2576)).